Here is a 1012-residue protein sequence, read N- to C-terminus: Formate dehydrogenase subunit alpha (1012 aa).

The segment at residues 1 to 35 (MLIKRRAFLKLTAAGATLSAFGGLGVDLAPAKAQA) is a signal peptide (tat-type signal). The region spanning 45 to 103 (AKQTTSVCCYCSVGCGLIVHTDKKTNRAINVEGDPDHPINEGSLCAKGASTWQLAENER) is the 4Fe-4S Mo/W bis-MGD-type domain. 4 residues coordinate [4Fe-4S] cluster: cysteine 52, cysteine 55, cysteine 59, and cysteine 89. Selenocysteine 193 serves as a coordination point for W-bis(molybdopterin guanine dinucleotide). Selenocysteine 193 is a non-standard amino acid (selenocysteine). 5 residues coordinate Ca(2+): threonine 393, lysine 395, lysine 398, leucine 428, and asparagine 430. A disulfide bond links cysteine 852 and cysteine 879.

It belongs to the prokaryotic molybdopterin-containing oxidoreductase family. In terms of assembly, heterodimer of alpha (FdhA) and beta (FdhB) subunits. The cofactor is [4Fe-4S] cluster. W-bis(molybdopterin guanine dinucleotide) serves as cofactor. In terms of processing, the disulfide bond is likely to be broken in the active form of this enzyme. Predicted to be exported by the Tat system. The position of the signal peptide cleavage has been experimentally proven.

It localises to the periplasm. The catalysed reaction is formate + NAD(+) = CO2 + NADH. Its function is as follows. Alpha chain of the formate dehydrogenase (FDH) catalyze the reversible two-electron oxidation of formate to carbon dioxide. FDH loses activity in the presence of air, but this activity can be restored. The alpha subunit of formate dehydrogenase forms the active site. In Megalodesulfovibrio gigas (Desulfovibrio gigas), this protein is Formate dehydrogenase subunit alpha.